Reading from the N-terminus, the 62-residue chain is Ferredoxin-1 (62 aa).

4Fe-4S ferredoxin-type domains are found at residues W3 to G32 and K33 to N62. 2 residues coordinate [3Fe-4S] cluster: C12 and C18. [4Fe-4S] cluster contacts are provided by C22, C42, C45, and C48. Residue C52 coordinates [3Fe-4S] cluster.

Homodimer. [3Fe-4S] cluster is required as a cofactor. The cofactor is [4Fe-4S] cluster.

In terms of biological role, ferredoxins are iron-sulfur proteins that transfer electrons in a wide variety of metabolic reactions. This ferredoxin serves as a carrier for pyruvate dehydrogenase. In Nitratidesulfovibrio vulgaris (strain DSM 19637 / Miyazaki F) (Desulfovibrio vulgaris), this protein is Ferredoxin-1.